A 207-amino-acid chain; its full sequence is 2,3-bisphosphoglycerate-dependent phosphoglycerate mutase (207 aa).

Substrate contacts are provided by residues 10-17 (RHGQSEWN), 23-24 (TG), R62, 89-92 (ERDY), K100, 116-117 (RR), and 160-161 (GN). The Tele-phosphohistidine intermediate role is filled by H11. E89 functions as the Proton donor/acceptor in the catalytic mechanism.

It belongs to the phosphoglycerate mutase family. BPG-dependent PGAM subfamily. As to quaternary structure, homodimer.

It carries out the reaction (2R)-2-phosphoglycerate = (2R)-3-phosphoglycerate. It participates in carbohydrate degradation; glycolysis; pyruvate from D-glyceraldehyde 3-phosphate: step 3/5. Functionally, catalyzes the interconversion of 2-phosphoglycerate and 3-phosphoglycerate. The sequence is that of 2,3-bisphosphoglycerate-dependent phosphoglycerate mutase from Nitrobacter hamburgensis (strain DSM 10229 / NCIMB 13809 / X14).